The chain runs to 792 residues: MSLPTKRSTFSAASASDDSSYSSPPMKKAKNDLHHSPQHPNTADKVVGFHMEEDPTPAAANLSRKKATLPQPTKKFVIKLNKAKPTLPTNFEENTWEKLQSAIRAIFLKKKISFDLESLYQAVDNLCLHKLDGKLYDQIEKECEEHISAALQSLVGQNTDLTVFLSRVEKCWQDFCDQMLMIRSIALTLDRKYVIQNPNVRSLWEMGLQLFRKHLSLAPEVEQRTVKGLLSMIEKERLAEAVNRTLLSHLLKMFTALGIYMESFEKPFLEGTSEFYAAEGMKYMQQSDVPEYLKHVEGRLHEENERCILYIDAVTRKPLITTVERQLLERHILVVLEKGFTTLMDGRRTEDLQRMQTLFSRVNALESLRQALSSYVRKTGQKIVMDEEKDKDMVQSLLDFKASLDIIWEESFYKNESFGNTIKDSFEHLINLRQNRPAELIAKFLDEKLRAGNKGTSEEELESVLEKVLVLFRFIQGKDVFEAFYKKDLAKRLLLGKSASIDAEKSMISKLKTECGSQFTNKLEGMFKDIELSKEINESFKQSSQARTKLPSGIEMSVHVLTTGYWPTYPPMDVKLPHELNVYQDIFKEFYLSKYSGRRLMWQNSLGHCVLKADFSKGKKELAVSLFQAVVLMLFNDAMKLSFEDIKDSTSIEDKELRRTLQSLACGKVRVLQKNPKGRDVEDGDEFEFNDEFAAPLYRIKVNAIQMKETVEENTSTTERVFQDRQYQIDAAIVRIMKTRKVLSHTLLITELFQQLKFPIKPADLKKRIESLIDREYLEREKSNPQIYNYLA.

Residues 1 to 10 (MSLPTKRSTF) show a composition bias toward polar residues. The segment at 1 to 43 (MSLPTKRSTFSAASASDDSSYSSPPMKKAKNDLHHSPQHPNTA) is disordered. Residues 11–23 (SAASASDDSSYSS) are compositionally biased toward low complexity. Residues 724-784 (DRQYQIDAAI…REYLEREKSN (61 aa)) form the Cullin neddylation domain. Lysine 738 participates in a covalent cross-link: Glycyl lysine isopeptide (Lys-Gly) (interchain with G-Cter in NEDD8).

This sequence belongs to the cullin family. In terms of assembly, interacts with COP10, CSN3, CSN4, CSN5, CSN8, DDB1A, DDB1B, DDB2, DET1 and RBX1. Neddylated (rubylated). Deneddylated via its interaction with the COP9 signalosome (CSN) complex. In terms of tissue distribution, ubiquitous.

The protein localises to the nucleus. It functions in the pathway protein modification; protein ubiquitination. Its function is as follows. Component of the CUL4-RBX1-CDD (COP10-DDB1a-DET1) E3 ubiquitin-protein ligase complex which mediates the ubiquitination and subsequent proteasomal degradation of target proteins. Participates in the CDD complex to light-mediated control of development. May repress photomorphogenesis through enhancing COP1 E3 ubiquitin-protein ligase activity. Acts together with the CUL4-DDB1-COP1-SPA E3 ubiquitin-protein ligase complexes in the repression of photomorphogenesis and flowering time. Component ot the CUL4-RBX1-DDB1-PRL1 E3 ubiquitin-protein ligase complex which mediates ubiquitination and subsequent degradation of AKIN10. Component of the CUL4-RBX1-DDB1-DWA1/DWA2 E3 ubiquitin-protein ligase complex that acts as a negative regulator in abscisic acid (ABA) signaling and may target ABI5 for degradation. The protein is Cullin-4 (CUL4) of Arabidopsis thaliana (Mouse-ear cress).